Reading from the N-terminus, the 342-residue chain is Adenylate isopentenyltransferase 6, chloroplastic (342 aa).

A chloroplast-targeting transit peptide spans 1-33; the sequence is MQQLMTLLSPPLSHSSLLPTVTTKFGSPRLVTT. 52 to 59 contacts ATP; the sequence is GTTGTGKS.

The protein belongs to the IPP transferase family. Expressed in siliques, at the mRNA level.

Its subcellular location is the plastid. It localises to the chloroplast. The catalysed reaction is dimethylallyl diphosphate + ADP = N(6)-(dimethylallyl)adenosine 5'-diphosphate + diphosphate. It catalyses the reaction dimethylallyl diphosphate + ATP = N(6)-(dimethylallyl)adenosine 5'-triphosphate + diphosphate. Involved in cytokinin biosynthesis. Catalyzes the transfer of an isopentenyl group from dimethylallyl diphosphate (DMAPP) to ATP and ADP. This chain is Adenylate isopentenyltransferase 6, chloroplastic (IPT6), found in Arabidopsis thaliana (Mouse-ear cress).